The chain runs to 326 residues: tRNA U34 carboxymethyltransferase (326 aa).

Positions 91, 105, 110, 130, 196, 200, and 315 each coordinate carboxy-S-adenosyl-L-methionine.

Belongs to the class I-like SAM-binding methyltransferase superfamily. CmoB family. Homotetramer.

The catalysed reaction is carboxy-S-adenosyl-L-methionine + 5-hydroxyuridine(34) in tRNA = 5-carboxymethoxyuridine(34) in tRNA + S-adenosyl-L-homocysteine + H(+). Functionally, catalyzes carboxymethyl transfer from carboxy-S-adenosyl-L-methionine (Cx-SAM) to 5-hydroxyuridine (ho5U) to form 5-carboxymethoxyuridine (cmo5U) at position 34 in tRNAs. The sequence is that of tRNA U34 carboxymethyltransferase from Tolumonas auensis (strain DSM 9187 / NBRC 110442 / TA 4).